The sequence spans 519 residues: Glucose-1-phosphate adenylyltransferase large subunit 2, chloroplastic/amyloplastic (519 aa).

This sequence belongs to the bacterial/plant glucose-1-phosphate adenylyltransferase family. Heterotetramer. Leaves and tubers.

It localises to the plastid. The protein resides in the chloroplast. The protein localises to the amyloplast. The catalysed reaction is alpha-D-glucose 1-phosphate + ATP + H(+) = ADP-alpha-D-glucose + diphosphate. It participates in glycan biosynthesis; starch biosynthesis. Activated by 3'phosphoglycerate, inhibited by orthophosphate. Allosteric regulation. Its function is as follows. This protein plays a role in synthesis of starch. It catalyzes the synthesis of the activated glycosyl donor, ADP-glucose from Glc-1-P and ATP. This is Glucose-1-phosphate adenylyltransferase large subunit 2, chloroplastic/amyloplastic (AGPS2) from Solanum tuberosum (Potato).